The primary structure comprises 199 residues: uncharacterized protein (199 aa).

The helical transmembrane segment at 17–37 threads the bilayer; it reads AGAVTLGIGFFALASALWFLI.

It is found in the membrane. This is an uncharacterized protein from Homo sapiens (Human).